The chain runs to 883 residues: 3-hydroxy-3-methylglutaryl-coenzyme A reductase (883 aa).

The Cytoplasmic portion of the chain corresponds to 1–9; sequence MLSRLFRMH. Residues 10 to 39 form a helical membrane-spanning segment; that stretch reads GQFVASHPWEVIVGTVTLTICMMSMNMFTG. At 40–56 the chain is on the lumenal side; that stretch reads NDKICGWNYACPKFEED. A helical membrane pass occupies residues 57–78; the sequence is VLSSDIIILTITRCIAILYIYF. At 79 to 89 the chain is on the cytoplasmic side; sequence QFQNLRQLGSK. The chain crosses the membrane as a helical span at residues 90–114; the sequence is YILGIAGLFTIFSSFVFSTVVIHFL. Over 115–123 the chain is Lumenal; sequence DKELTGLNE. The chain crosses the membrane as a helical span at residues 124–149; sequence ALPFFLLLIDLSKASALAKFALSSNS. The Cytoplasmic portion of the chain corresponds to 150–159; the sequence is QDEVRDNIAR. The chain crosses the membrane as a helical span at residues 160 to 187; that stretch reads GMAILGPTFTLEALVECLVIGVGTMSGV. At 188 to 191 the chain is on the lumenal side; it reads RQLE. The helical transmembrane segment at 192 to 220 threads the bilayer; it reads IMCCFGCMSVLANYFAFMTFFPACVSLVL. At 221 to 249 the chain is on the cytoplasmic side; it reads ELSRESREGRPIWQLSQFASVLEEEEDNK. A helical transmembrane segment spans residues 250 to 276; the sequence is PNPVTQRVKMIMSLGLVLVHAHSRWIS. Residues 277–316 lie on the Lumenal side of the membrane; the sequence is EPSSQNSTSISDHEVTTMLDDMMPKRVEPSMPLWQFYLSR. Residue Asn282 is glycosylated (N-linked (GlcNAc...) asparagine). Residues 317–341 traverse the membrane as a helical segment; sequence MVTMDVEQIITLGLALLLAVKYIFF. Residues 342–883 lie on the Cytoplasmic side of the membrane; that stretch reads EQTETESTFS…LPGTCTKKAA (542 aa). The interval 373 to 396 is disordered; it reads REPEQEKTVHVSTTEEASSKEETE. Active-site charge relay system residues include Glu554, Lys686, and Asp762. His861 acts as the Proton donor in catalysis.

It belongs to the HMG-CoA reductase family. Homotetramer. Homodimer.

It is found in the endoplasmic reticulum membrane. It localises to the peroxisome membrane. The catalysed reaction is (R)-mevalonate + 2 NADP(+) + CoA = (3S)-3-hydroxy-3-methylglutaryl-CoA + 2 NADPH + 2 H(+). It participates in metabolic intermediate biosynthesis; (R)-mevalonate biosynthesis; (R)-mevalonate from acetyl-CoA: step 3/3. In terms of biological role, catalyzes the conversion of (3S)-hydroxy-3-methylglutaryl-CoA (HMG-CoA) to mevalonic acid, the rate-limiting step in the synthesis of cholesterol and other isoprenoids, thus plays a critical role in cellular cholesterol homeostasis. This is 3-hydroxy-3-methylglutaryl-coenzyme A reductase (hmgcr) from Xenopus laevis (African clawed frog).